We begin with the raw amino-acid sequence, 149 residues long: MLKAAAAALYRKNSNFLQGLRLLHKMSDQDLAKIPLVDIDEEGIFKYILIRVTGKETADGTEPSKLVVRGYADCEWHADIYERTQGTIKGTGLDTECLGGGRIEHNPEKKYLKVYGHSTGYGKADHAESKRVLLTKYKNYEIETSDEGY.

Substrate is bound at residue lysine 46. The active-site Proton acceptor is histidine 77. Position 118–120 (118–120 (STG)) interacts with substrate.

Belongs to the janus family.

JanA and janB regulate somatic sex differentiation. In Drosophila pseudoobscura pseudoobscura (Fruit fly), this protein is Sex-regulated protein janus-A (janA).